The primary structure comprises 172 residues: Single-stranded DNA-binding protein A (172 aa).

The SSB domain maps to 1–104 (MLNRVVLVGR…VQAESVQFLE (104 aa)). Tyr-82 is subject to Phosphotyrosine. The interval 103-172 (LEPKNGGGSG…IDISDDDLPF (70 aa)) is disordered. The segment covering 107 to 131 (NGGGSGSGGYNEGNSGGGQYFGGGQ) has biased composition (gly residues). Positions 132 to 149 (NDNPFGGNQNNQRRNQGN) are enriched in low complexity. Positions 167–172 (DDDLPF) match the Important for interaction with partner proteins motif.

In terms of assembly, homotetramer. Interacts with proteins involved in DNA metabolism such as PriA, RecQ, RecG, RecS, DnaE, RarA, RecJ, RecO, SbcC, RecD2 (formerly YrrC), XseA and Ung. Interacts with RecQ via its 10 C-terminal residues. Interacts with RecD2. Phosphorylated by YwqD, which increases ssDNA affinity; dephosphorylated by YwqE.

The protein resides in the cytoplasm. It localises to the nucleoid. In terms of biological role, plays an important role in DNA replication, recombination and repair. Binds to single-stranded (ss)DNA and to an array of partner proteins to recruit them to their sites of action during DNA metabolism. Associates with oriC, this requires DnaA. SsbA binding to ssDNA prevents DnaB and DnaD individually from binding to DNA. Has a 20-fold higher affinity for ssDNA than SsbB; SsbA and DprA activate the homologous DNA strand exchange function of RecA-ATP. Enhances the activity of 3'-5' DNA helicase RecQ. The polypeptide is Single-stranded DNA-binding protein A (ssbA) (Bacillus subtilis (strain 168)).